The following is a 281-amino-acid chain: MEANTRSTGRLPAAFLTPGSSSFMDFLGEHQPEMLPGNRQLPPVQGVIEAPHGTTIVAVTFPGGVVLAGDRRATMGNMIAQRDIEKVFPADEYSAVGIAGTAGLAVEMVKLFQLELEHFEKVEGAQLSLEGKANRLSTMIRSNLGMAMQGLAVVPLFAGYDVDRGRGRIFSYDVTGGRSEERHFATTGSGSVFARGAMKKLFRDDLTEEQATTLVVQALYDAADDDSATGGPDVARRIYPIITVITEDGFRRLGEDEAAELAGSVLQARLEQPDGPRAALL.

Residues 1 to 53 constitute a propeptide, removed in mature form; by autocatalysis; that stretch reads MEANTRSTGRLPAAFLTPGSSSFMDFLGEHQPEMLPGNRQLPPVQGVIEAPHG. Thr54 acts as the Nucleophile in catalysis.

This sequence belongs to the peptidase T1B family. As to quaternary structure, the 20S proteasome core is composed of 14 alpha and 14 beta subunits that assemble into four stacked heptameric rings, resulting in a barrel-shaped structure. The two inner rings, each composed of seven catalytic beta subunits, are sandwiched by two outer rings, each composed of seven alpha subunits. The catalytic chamber with the active sites is on the inside of the barrel. Has probably a gated structure, the ends of the cylinder being occluded by the N-termini of the alpha-subunits. Is likely capped by the proteasome-associated ATPase, ARC.

Its subcellular location is the cytoplasm. It carries out the reaction Cleavage of peptide bonds with very broad specificity.. It functions in the pathway protein degradation; proteasomal Pup-dependent pathway. The formation of the proteasomal ATPase ARC-20S proteasome complex, likely via the docking of the C-termini of ARC into the intersubunit pockets in the alpha-rings, may trigger opening of the gate for substrate entry. Interconversion between the open-gate and close-gate conformations leads to a dynamic regulation of the 20S proteasome proteolysis activity. Peptidolytic activity is completely inhibited by lactacystin, and to a lesser extent, by N-acetyl-Leu-Leu-norleucinal (Ac-LLnL) and benzoyloxycarbonyl-Leu-Leu-Leu-vinylsulfone (Z-LLL-VS) in vitro. Functionally, component of the proteasome core, a large protease complex with broad specificity involved in protein degradation. The S.coelicolor proteasome is able to cleave oligopeptides after hydrophobic residues, but not after basic or acidic residues, thus displaying chymotrypsin-like activity but not trypsin-like activity. The chain is Proteasome subunit beta from Streptomyces coelicolor (strain ATCC BAA-471 / A3(2) / M145).